Consider the following 118-residue polypeptide: Large ribosomal subunit protein bL19 (118 aa).

The protein belongs to the bacterial ribosomal protein bL19 family.

Functionally, this protein is located at the 30S-50S ribosomal subunit interface and may play a role in the structure and function of the aminoacyl-tRNA binding site. This is Large ribosomal subunit protein bL19 from Coprothermobacter proteolyticus (strain ATCC 35245 / DSM 5265 / OCM 4 / BT).